We begin with the raw amino-acid sequence, 336 residues long: Aspartate--ammonia ligase (336 aa).

The protein belongs to the class-II aminoacyl-tRNA synthetase family. AsnA subfamily.

Its subcellular location is the cytoplasm. The enzyme catalyses L-aspartate + NH4(+) + ATP = L-asparagine + AMP + diphosphate + H(+). It participates in amino-acid biosynthesis; L-asparagine biosynthesis; L-asparagine from L-aspartate (ammonia route): step 1/1. This is Aspartate--ammonia ligase from Ruminiclostridium cellulolyticum (strain ATCC 35319 / DSM 5812 / JCM 6584 / H10) (Clostridium cellulolyticum).